A 200-amino-acid chain; its full sequence is MARYTGPTWKISRRLGISLSGTGKELQKRPYPPGQHGPSQRRKLSEYGLQLQEKQKLRHMYGVNERQFRKTFEEAGKMPGKHGENFMILLESRLDNLVYRLGFARTRRQARQLVTHGHILVDGNRVNIPSYRVKPGQTISVREKSRNLQVIKEALELNNFVPDYLTLDAEKLEGTYTRLPERSELPSEINEALIVEFYSR.

The interval 22 to 43 (TGKELQKRPYPPGQHGPSQRRK) is disordered. Positions 92–152 (SRLDNLVYRL…EKSRNLQVIK (61 aa)) constitute an S4 RNA-binding domain.

It belongs to the universal ribosomal protein uS4 family. Part of the 30S ribosomal subunit. Contacts protein S5. The interaction surface between S4 and S5 is involved in control of translational fidelity.

In terms of biological role, one of the primary rRNA binding proteins, it binds directly to 16S rRNA where it nucleates assembly of the body of the 30S subunit. With S5 and S12 plays an important role in translational accuracy. This is Small ribosomal subunit protein uS4 from Geobacillus sp. (strain WCH70).